A 444-amino-acid chain; its full sequence is Sprouty-related, EVH1 domain-containing protein 1 (444 aa).

An N-acetylserine modification is found at serine 2. Residues 6–123 (ATSDNDNSYA…RGIRRAIEDI (118 aa)) form the WH1 domain. Residue lysine 225 is modified to N6-methyllysine. The 53-residue stretch at 234–286 (SIRHVSFQDEDEIVRINPRDILIRRYADYRHPDMWKNDLERDDTDSSVPFSKQ) folds into the KBD domain. A Phosphoserine modification is found at serine 239. Residues 268 to 287 (WKNDLERDDTDSSVPFSKQD) are disordered. Serine 309 carries the phosphoserine modification. The interval 333-444 (SRCVYCQERF…CCGGKHKAAG (112 aa)) is required for interaction with TESK1. An SPR domain is found at 334–442 (RCVYCQERFN…CGCCGGKHKA (109 aa)).

Homodimer and heterodimer. Able to interact with SPRED2 to form heterodimers. Interacts (via C-terminus) with TAOK1/MARKK (via C-terminus); the interaction does not affect TAOK1 kinase activity. Interacts (via C-terminus) with TESK1 (via C-terminus); the interaction inhibits TESK1 kinase activity. Interacts with CAV1. Interacts with RAS. Interacts with palmitoyltransferase ZDHHC17/HIP14; the interaction leads to palmitoylation of SPRED1. Palmitoylated by ZDHHC17/HIP14. In terms of processing, ubiquitinated. Post-translationally, phosphorylated on tyrosine. Expressed in brain. Weakly expressed in lung, heart, liver, kidney, intestine, spleen, testis, thymus, colon and ovary. Also expressed in embryonic tissues such as heart, lung, liver and brain. Highly expressed in IL3-dependent hematopoietic cell lines (Ba/F3 and MC/9) and bone marrow-derived mast cells (BMMC).

The protein localises to the cell membrane. It localises to the membrane. Its subcellular location is the caveola. It is found in the nucleus. Tyrosine kinase substrate that inhibits growth-factor-mediated activation of MAP kinase. Negatively regulates hematopoiesis of bone marrow. Inhibits fibroblast growth factor (FGF)-induced retinal lens fiber differentiation, probably by inhibiting FGF-mediated phosphorylation of ERK1/2. Attenuates actin stress fiber formation via inhibition of TESK1-mediated phosphorylation of cofilin. Inhibits TGFB-induced epithelial-to-mesenchymal transition in lens epithelial cells. This chain is Sprouty-related, EVH1 domain-containing protein 1 (Spred1), found in Mus musculus (Mouse).